We begin with the raw amino-acid sequence, 328 residues long: L-tyrosine isonitrile synthase (328 aa).

This sequence belongs to the isocyanide synthase family. As to quaternary structure, monomer in solution.

It catalyses the reaction D-ribulose 5-phosphate + L-tyrosine = (2S)-3-(4-hydroxyphenyl)-2-isocyanopropanoate + hydroxyacetone + formaldehyde + phosphate + H2O + H(+). Its function is as follows. Involved in the biosynthesis of paerucumarin, a cyclized isocyano derivative of tyrosine. Responsible for the synthesis of the isonitrile group on tyrosine using the C2 of ribulose 5-phosphate as the source of the carbon atom. In Pseudomonas aeruginosa (strain ATCC 15692 / DSM 22644 / CIP 104116 / JCM 14847 / LMG 12228 / 1C / PRS 101 / PAO1), this protein is L-tyrosine isonitrile synthase.